Here is a 502-residue protein sequence, read N- to C-terminus: Sodium/proline symporter (502 aa).

A run of 13 helical transmembrane segments spans residues 6–26 (PMLV…FIAW), 42–62 (LGPF…WLLM), 68–88 (IFLS…GAWI), 127–147 (IISA…GIVA), 163–183 (ALWA…FLAV), 192–212 (SLMI…VGGF), 235–255 (FVAI…PHIL), 276–296 (TWMI…IAYF), 320–340 (ILFN…AVMS), 371–391 (LVWV…ALAA), 398–418 (LGLV…VVLF), 430–450 (ALAG…YGWL), and 452–472 (LYEI…FSLL).

It belongs to the sodium:solute symporter (SSF) (TC 2.A.21) family.

The protein resides in the cell inner membrane. It catalyses the reaction L-proline(in) + Na(+)(in) = L-proline(out) + Na(+)(out). Its function is as follows. Catalyzes the sodium-dependent uptake of extracellular L-proline. This chain is Sodium/proline symporter, found in Salmonella typhimurium (strain LT2 / SGSC1412 / ATCC 700720).